Here is a 204-residue protein sequence, read N- to C-terminus: RNA-free ribonuclease P (204 aa).

This sequence belongs to the HARP family.

It carries out the reaction Endonucleolytic cleavage of RNA, removing 5'-extranucleotides from tRNA precursor.. RNA-free RNase P that catalyzes the removal of the 5'-leader sequence from pre-tRNA to produce the mature 5'-terminus. The protein is RNA-free ribonuclease P of Ignicoccus hospitalis (strain KIN4/I / DSM 18386 / JCM 14125).